The primary structure comprises 404 residues: Multidrug resistance protein MdtG (404 aa).

Transmembrane regions (helical) follow at residues 19-39, 56-76, 90-110, 113-133, 144-164, 171-191, 222-242, 254-274, 288-308, 317-337, and 376-396; these read LGCF…PLYV, LVFS…GGLA, LGMA…QFLI, ALLG…ATQV, TLST…GLLA, PVFF…FFFI, LFVT…ILTL, IAFI…LSAP, ILIV…FVQT, FLLG…LVYN, and AVFC…WNSL.

The protein belongs to the major facilitator superfamily. DHA1 family. MdtG (TC 2.A.1.2.20) subfamily.

It is found in the cell inner membrane. This Salmonella typhimurium (strain LT2 / SGSC1412 / ATCC 700720) protein is Multidrug resistance protein MdtG.